We begin with the raw amino-acid sequence, 126 residues long: Thioredoxin-like 3-3 (126 aa).

The segment at 1 to 24 (MRKQESEGANLEFESKSNDNGNVK) is disordered. Positions 5 to 126 (ESEGANLEFE…RLHDRLWLHS (122 aa)) constitute a Thioredoxin domain. Active-site nucleophile residues include Cys55 and Cys58. Cys55 and Cys58 are joined by a disulfide.

This sequence belongs to the thioredoxin family.

Probable thiol-disulfide oxidoreductase that may participate in various redox reactions. The chain is Thioredoxin-like 3-3 from Arabidopsis thaliana (Mouse-ear cress).